The chain runs to 453 residues: UDP-N-acetylmuramoylalanine--D-glutamate ligase (453 aa).

115-121 is an ATP binding site; it reads GTNGKTT.

It belongs to the MurCDEF family.

Its subcellular location is the cytoplasm. The enzyme catalyses UDP-N-acetyl-alpha-D-muramoyl-L-alanine + D-glutamate + ATP = UDP-N-acetyl-alpha-D-muramoyl-L-alanyl-D-glutamate + ADP + phosphate + H(+). Its pathway is cell wall biogenesis; peptidoglycan biosynthesis. In terms of biological role, cell wall formation. Catalyzes the addition of glutamate to the nucleotide precursor UDP-N-acetylmuramoyl-L-alanine (UMA). This is UDP-N-acetylmuramoylalanine--D-glutamate ligase from Geotalea uraniireducens (strain Rf4) (Geobacter uraniireducens).